The primary structure comprises 161 residues: Zinc finger protein KNUCKLES (161 aa).

Residues 1 to 33 (MAEPPPSYLHFVGPAKTRSSSKRHSFSSSAHPA) form a disordered region. Residues 38–60 (FPCQYCPRKFYTSQALGGHQNAH) form a C2H2-type zinc finger. A disordered region spans residues 142–161 (GGNGVMEEDEPLDLDLSLRL). Positions 155 to 159 (LDLSL) match the EAR-like (transcriptional repression) motif.

In terms of tissue distribution, first expressed in developing carpel primordia, and later in stamens and ovules of flower buds.

The protein resides in the nucleus. Its function is as follows. May function as a transcriptional repressor of cellular proliferation that regulates floral determinacy and relative size of basal pattern elements along the proximo-distal axis of the developing gynoecium. This is Zinc finger protein KNUCKLES (KNU) from Arabidopsis thaliana (Mouse-ear cress).